The following is a 410-amino-acid chain: F-box/WD-40 repeat-containing protein 1 (410 aa).

The F-box domain maps to Ser-32–Leu-79. 2 WD repeats span residues Pro-109–Ile-150 and Asp-269–Ser-309.

In Arabidopsis thaliana (Mouse-ear cress), this protein is F-box/WD-40 repeat-containing protein 1 (FBW1).